The sequence spans 447 residues: Alkylglycerol monooxygenase (447 aa).

Transmembrane regions (helical) follow at residues 43 to 63 and 111 to 131; these read ATPF…ILKG and WDSP…YYWF. The 132-residue stretch at 118-249 folds into the Fatty acid hydroxylase domain; that stretch reads YLTFLGVDFG…LIIWDRIFGT (132 aa). The short motif at 132-136 is the Histidine box-1 element; it reads HRMAH. Residues 145–149 carry the Histidine box-2 motif; it reads HQAHH. A helical transmembrane segment spans residues 170-190; it reads SWVFYCPLALFVPPSVFAVHI. A Histidine box-3 motif is present at residues 221–225; that stretch reads HRVHH. Transmembrane regions (helical) follow at residues 334–354, 363–383, and 413–433; these read FLKI…EETF, VTIL…GFLL, and IESL…FWGV.

The protein belongs to the sterol desaturase family. TMEM195 subfamily. Fe cation is required as a cofactor.

The protein localises to the endoplasmic reticulum membrane. It carries out the reaction 1-O-(1,2-saturated-alkyl)-sn-glycerol + (6R)-L-erythro-5,6,7,8-tetrahydrobiopterin + O2 = a 1-(1-hydroxyalkyl)-sn-glycerol + (6R)-L-erythro-6,7-dihydrobiopterin + H2O. Functionally, glyceryl-ether monooxygenase that cleaves the O-alkyl bond of ether lipids. Ether lipids are essential components of brain membranes. The chain is Alkylglycerol monooxygenase (Agmo) from Rattus norvegicus (Rat).